The primary structure comprises 200 residues: MAAGKARIGHLAPGFTAKAVMPDGQFKDISMSDYRGKYVVFFFYPLDFTFVCPTEIIAFSDAAEEFRKIGCEVIGASVDSHFCHLAWTNTPRKHGGLGAMKIPLVADTMRSISTDYGVFEGGMRASPTGGLFIIDDKGVLRQITINDLPVGRCVDEILRLVQAFQFTDKHGEVCPAGWKPGSDTIKPDVQKSKDFFSKQQ.

The Thioredoxin domain maps to 6-166; the sequence is ARIGHLAPGF…ILRLVQAFQF (161 aa). Catalysis depends on C52, which acts as the Cysteine sulfenic acid (-SOH) intermediate.

It belongs to the peroxiredoxin family. AhpC/Prx1 subfamily. As to quaternary structure, homodimer; disulfide-linked, upon oxidation.

It catalyses the reaction a hydroperoxide + [thioredoxin]-dithiol = an alcohol + [thioredoxin]-disulfide + H2O. Thiol-specific peroxidase that catalyzes the reduction of hydrogen peroxide and organic hydroperoxides to water and alcohols, respectively. Plays a role in cell protection against oxidative stress by detoxifying peroxides and as sensor of hydrogen peroxide-mediated signaling events. The chain is Peroxiredoxin from Oncorhynchus mykiss (Rainbow trout).